Reading from the N-terminus, the 748-residue chain is E3 ubiquitin-protein ligase DTX3L (748 aa).

Position 2 is an N-acetylalanine (A2). Residue S9 is modified to Phosphoserine. 3 disordered regions span residues 94–117 (DLRP…PSLT), 209–238 (EQKR…PPDQ), and 528–562 (QETP…PAAS). Positions 101–117 (SLTQPVETPSSRPPSLT) are enriched in polar residues. Composition is skewed to basic and acidic residues over residues 209-219 (EQKRKGSEQKR) and 227-236 (TPPDVEREPP). S215 carries the phosphoserine modification. Residue S536 is modified to Phosphoserine. Residues 569 to 608 (CVICMDTISNKHVLPKCKHEFCTSCISKAMLIKPVCPVCL) form an RING-type zinc finger.

It belongs to the Deltex family. Homodimer and heterodimer. Can heterodimerize with DTX1, enhancing its ubiquitin ligase activity in vitro. Interacts (via N-terminus) with ADP ribosyltransferase PARP9/BAL1 (via PARP catalytic domain) forming a stable complex; the interaction is required to activate PARP9 but is dispensable for DTX3L catalytic activity. Forms a complex with STAT1 and PARP9 independently of IFNB1 or IFNG-mediated STAT1 'Tyr-701' phosphorylation. Found in a complex with PARP9, STAT1 and H2BC9. Found in a complex with E3 ligase ITCH and ESCRT-0 components HGS and STAM. Interacts (via C-terminus) with ITCH; the interaction is increased upon CXCL12 stimulation and inhibits ITCH catalytic activity; the interaction is direct. Interacts with HGS and STAM; the interaction brings together HGS and STAM and promotes their recruitment to early endosomes. Autoubiquitinated.

It localises to the cytoplasm. The protein resides in the nucleus. The protein localises to the early endosome membrane. It is found in the lysosome membrane. It carries out the reaction S-ubiquitinyl-[E2 ubiquitin-conjugating enzyme]-L-cysteine + [acceptor protein]-L-lysine = [E2 ubiquitin-conjugating enzyme]-L-cysteine + N(6)-ubiquitinyl-[acceptor protein]-L-lysine.. It participates in protein modification; protein ubiquitination. With respect to regulation, binding to PARP9 enhances DTX3L catalytic activity. In terms of biological role, E3 ubiquitin-protein ligase which, in association with ADP-ribosyltransferase PARP9, plays a role in DNA damage repair and in interferon-mediated antiviral responses. Monoubiquitinates several histones, including histone H2A, H2B, H3 and H4. In response to DNA damage, mediates monoubiquitination of 'Lys-91' of histone H4 (H4K91ub1). The exact role of H4K91ub1 in DNA damage response is still unclear but it may function as a licensing signal for additional histone H4 post-translational modifications such as H4 'Lys-20' methylation (H4K20me). PARP1-dependent PARP9-DTX3L-mediated ubiquitination promotes the rapid and specific recruitment of 53BP1/TP53BP1, UIMC1/RAP80, and BRCA1 to DNA damage sites. By monoubiquitinating histone H2B H2BC9/H2BJ and thereby promoting chromatin remodeling, positively regulates STAT1-dependent interferon-stimulated gene transcription and thus STAT1-mediated control of viral replication. Independently of its catalytic activity, promotes the sorting of chemokine receptor CXCR4 from early endosome to lysosome following CXCL12 stimulation by reducing E3 ligase ITCH activity and thus ITCH-mediated ubiquitination of endosomal sorting complex required for transport ESCRT-0 components HGS and STAM. In addition, required for the recruitment of HGS and STAM to early endosomes. This chain is E3 ubiquitin-protein ligase DTX3L (Dtx3l), found in Mus musculus (Mouse).